We begin with the raw amino-acid sequence, 248 residues long: MERASLIQKAKLAEQAERYEDMAAFMKSAVEKGEELSCEERNLLSVAYKNVVGGQRAAWRVLSSIEQKSNEEGSEEKGPEVKEYREKVETELRGVCDTVLGLLDSHLIKGAGDAESRVFYLKMKGDYYRYLAEVATGDDKKRIIDSARSAYQEAMDISKKEMPPTNPIRLGLALNFSVFHYEIANSPEEAISLAKTTFDEAMADLHTLSEDSYKDSTLIMQLLRDNLTLWTADSAGEEGGEAPEEPQS.

Phosphoserine is present on residues S5, S74, and S248.

The protein belongs to the 14-3-3 family. In terms of assembly, homodimer. Interacts with KRT17 and SAMSN1. Found in a complex with XPO7, EIF4A1, ARHGAP1, VPS26A, VPS29 and VPS35. Interacts with GAB2. Interacts with SRPK2. Interacts with COPS6. Interacts with COP1; this interaction leads to proteasomal degradation. Interacts with the 'Thr-369' phosphorylated form of DAPK2. Interacts with PI4KB. Interacts with SLITRK1. Interacts with LRRK2; this interaction is dependent on LRRK2 phosphorylation. Interacts with PKP3 (via N-terminus); the interaction maintains the cytoplasmic pool of PKP3, facilitates PKP3 exchange at desmosomes and restricts PKP3 localization to existing desmosome cell junctions. Interacts with LCP2. Post-translationally, ubiquitinated. Ubiquitination by RFFL induces proteasomal degradation and indirectly regulates p53/TP53 activation. In terms of tissue distribution, expressed in dorsal skin (at protein level). Expressed in the basal layer of skin epithelium and in outer root sheath of hair follicle.

It is found in the cytoplasm. Its subcellular location is the nucleus. The protein localises to the secreted. In terms of biological role, adapter protein implicated in the regulation of a large spectrum of both general and specialized signaling pathways. Binds to a large number of partners, usually by recognition of a phosphoserine or phosphothreonine motif. Binding generally results in the modulation of the activity of the binding partner. Promotes cytosolic retention of GBP1 GTPase by binding to phosphorylated GBP1, thereby inhibiting the innate immune response. Also acts as a TP53/p53-regulated inhibitor of G2/M progression. When bound to KRT17, regulates protein synthesis and epithelial cell growth by stimulating Akt/mTOR pathway. Acts to maintain desmosome cell junction adhesion in epithelial cells via interacting with and sequestering PKP3 to the cytoplasm, thereby restricting its translocation to existing desmosome structures and therefore maintaining desmosome protein homeostasis. Also acts to facilitate PKP3 exchange at desmosome plaques, thereby maintaining keratinocyte intercellular adhesion. May also regulate MDM2 autoubiquitination and degradation and thereby activate p53/TP53. The sequence is that of 14-3-3 protein sigma (Sfn) from Mus musculus (Mouse).